Here is a 481-residue protein sequence, read N- to C-terminus: Keratin, type I cytoskeletal 39 (481 aa).

The tract at residues 1 to 25 (MDTKGSTVTISSSTPPQNCSGNTNV) is disordered. The segment at 1-90 (MDTKGSTVTI…RCSDGINSHE (90 aa)) is head. Residues 90 to 401 (EKETMQILNE…SLLESLDGRL (312 aa)) enclose the IF rod domain. Residues 91–125 (KETMQILNERLASYLEKVRMLEGENADLEDKIQEE) are coil 1A. The linker 1 stretch occupies residues 126–136 (CSKTLPILCPD). The segment at 137–237 (YLSYYTTIEQ…HEEEINSLQC (101 aa)) is coil 1B. The tract at residues 238 to 253 (QLGDRINIEVTAAPSV) is linker 12. A coil 2 region spans residues 254–397 (DLNQILQKMR…ATYRSLLESL (144 aa)). Residues 398 to 481 (DGRLPCNPCT…PCYITRPAKV (84 aa)) are tail.

The protein belongs to the intermediate filament family. Heterotetramer of two type I and two type II keratins.

In terms of biological role, may play a role in late hair differentiation. The polypeptide is Keratin, type I cytoskeletal 39 (Krt39) (Rattus norvegicus (Rat)).